The following is a 591-amino-acid chain: Adenine deaminase (591 aa).

Belongs to the metallo-dependent hydrolases superfamily. Adenine deaminase family. In terms of assembly, homodimer. Requires Mn(2+) as cofactor.

The catalysed reaction is adenine + H2O + H(+) = hypoxanthine + NH4(+). In Edwardsiella ictaluri (strain 93-146), this protein is Adenine deaminase.